The sequence spans 156 residues: Terrestric acid biosynthesis cluster protein E (156 aa).

It functions in the pathway secondary metabolite biosynthesis. Its function is as follows. Part of the tra gene cluster that produces terrestric acid. The clavatol biosynthesis cluster cla and the terrestric acid cluster tra are both involved in the production of peniphenones and penilactones. The non-reducing PKS claF is responsible for the formation of clavatol from successive condensations of 3 malonyl-CoA units, presumably with a simple acetyl-CoA starter unit, and 2 methylation steps. The esterase claE probably collaborates with claF by catalyzing the hydrolysis of ACP-bound acyl intermediates to free the ACP from stalled intermediates. The clavatol oxidase claD then converts clavatol to hydroxyclavatol. Spontaneous dehydration of hydroxyclavatol leads to the accumulation of the highly active ortho-quinone methide. On the other hand, the PKS-NRPS hybrid traA is involved in the formation of crustosic acid, with the help of traB and traD. The polyketide synthase module (PKS) of traA is responsible for the synthesis of the polyketide backbone via the condensation of an acetyl-CoA starter unit with 3 malonyl-CoA units. The downstream nonribosomal peptide synthetase (NRPS) module then amidates the carboxyl end of the polyketide with L-malic acid. Because traA lacks a designated enoylreductase (ER) domain, the required activity is provided the enoyl reductase traG. Crustosic acid undergoes decarboxylation and isomerization to the terrestric acid, catalyzed by the 2-oxoglutarate-dependent dioxygenase traH. Both acids are further converted to the 2 gamma-butyrolactones (R)-5-methyltetronic acid and (S)-5-carboxylmethyltetronic acid, with involvement of the cytochrome P450 monooxygenase claJ. Spontaneous addition of the methide to these gamma-butyrolactones leads to peniphenone D and penilactone D, which undergo again stereospecific attacking by methide to give penilactones A and B. TraE seems not to be involved in the biosynthesis of peniphenones and penilactones in the conditions used to study its function. The chain is Terrestric acid biosynthesis cluster protein E from Penicillium crustosum (Blue mold fungus).